We begin with the raw amino-acid sequence, 61 residues long: Large ribosomal subunit protein uL30 (61 aa).

The protein belongs to the universal ribosomal protein uL30 family. As to quaternary structure, part of the 50S ribosomal subunit.

In Bifidobacterium longum (strain DJO10A), this protein is Large ribosomal subunit protein uL30.